A 634-amino-acid chain; its full sequence is Ankyrin repeat and SOCS box protein 2 (634 aa).

The region spanning 26–45 (SEEELVQMAIEQSLADKTRG) is the UIM domain. The disordered stretch occupies residues 35-81 (IEQSLADKTRGPTPAETSVSSQTNHQPGHIHPWTRSSSPPESPPARA). Residues 49–60 (AETSVSSQTNHQ) show a composition bias toward polar residues. 12 ANK repeats span residues 104-133 (AAMD…NLAE), 137-167 (EGWL…TIDQ), 171-200 (QEET…EPDI), 204-233 (SRET…DANH), 237-266 (RGWT…KVEA), 270-299 (YSIT…DINT), 303-332 (DSAS…DANK), 336-365 (DGLL…RTRV), 368-397 (SGIS…DVNT), 410-439 (RRTS…DPNR), 440-469 (DVIS…NIDA), and 476-504 (TAFP…DGEP). Residue Ser371 is modified to Phosphoserine. One can recognise an SOCS box domain in the interval 580–634 (EDWAVIKEKAEPPRPLAHLCRLRVRKAIGKYRIKLLDTLPLPGRLIRYLKYENTQ).

Belongs to the ankyrin SOCS box (ASB) family. In terms of assembly, component of a probable ECS E3 ubiquitin-protein ligase complex which contains CUL5, either RBX1 or RNF7/RBX2, Elongin BC complex (ELOB and ELOC) and ASB2. Interacts with SKP2. Through its interaction with SKP2, likely to bridge the formation of dimeric E3-ubiquitin-protein ligase complexes composed of an ECS complex and an SCF(SKP2) complex. Interacts with JAK2; the interaction targets JAK2 for Notch-mediated proteasomal degradation. Interacts with TCF3/E2A; the interaction is mediated by SKP2 and targets TCF3 for Notch-mediated proteasomal degradation. Interacts with DES. Monoubiquitinated.

It is found in the cytoplasm. Its subcellular location is the cytoskeleton. The protein localises to the stress fiber. The protein resides in the myofibril. It localises to the sarcomere. It is found in the z line. Its pathway is protein modification; protein ubiquitination. In terms of biological role, substrate-recognition component of a SCF-like ECS (Elongin-Cullin-SOCS-box protein) E3 ubiquitin-protein ligase complex which mediates the ubiquitination and subsequent proteasomal degradation of target proteins. Mediates Notch-induced ubiquitination and degradation of substrates including E2A and JAK2. Required during embryonic heart development for complete heart looping. Required for cardiomyocyte differentiation. Involved in myogenic differentiation and targets filamin FLNB for proteasomal degradation but not filamin FLNA. Also targets DES for proteasomal degradation. Acts as a negative regulator of skeletal muscle mass. The protein is Ankyrin repeat and SOCS box protein 2 of Rattus norvegicus (Rat).